We begin with the raw amino-acid sequence, 71 residues long: DNA-directed RNA polymerase subunit omega (71 aa).

The protein belongs to the RNA polymerase subunit omega family. As to quaternary structure, the RNAP catalytic core consists of 2 alpha, 1 beta, 1 beta' and 1 omega subunit. When a sigma factor is associated with the core the holoenzyme is formed, which can initiate transcription.

It catalyses the reaction RNA(n) + a ribonucleoside 5'-triphosphate = RNA(n+1) + diphosphate. Its function is as follows. Promotes RNA polymerase assembly. Latches the N- and C-terminal regions of the beta' subunit thereby facilitating its interaction with the beta and alpha subunits. This is DNA-directed RNA polymerase subunit omega from Aromatoleum aromaticum (strain DSM 19018 / LMG 30748 / EbN1) (Azoarcus sp. (strain EbN1)).